The following is a 338-amino-acid chain: D-erythrose-4-phosphate dehydrogenase (338 aa).

NAD(+) is bound at residue 12–13; it reads RI. Residues 154 to 156, Arg200, 213 to 214, and Arg236 each bind substrate; these read SCT and TK. Residue Cys155 is the Nucleophile of the active site. Asn318 contributes to the NAD(+) binding site.

The protein belongs to the glyceraldehyde-3-phosphate dehydrogenase family. Epd subfamily. As to quaternary structure, homotetramer.

It localises to the cytoplasm. The enzyme catalyses D-erythrose 4-phosphate + NAD(+) + H2O = 4-phospho-D-erythronate + NADH + 2 H(+). It participates in cofactor biosynthesis; pyridoxine 5'-phosphate biosynthesis; pyridoxine 5'-phosphate from D-erythrose 4-phosphate: step 1/5. Its function is as follows. Catalyzes the NAD-dependent conversion of D-erythrose 4-phosphate to 4-phosphoerythronate. This is D-erythrose-4-phosphate dehydrogenase from Tolumonas auensis (strain DSM 9187 / NBRC 110442 / TA 4).